Reading from the N-terminus, the 289-residue chain is Glycine--tRNA ligase alpha subunit (289 aa).

Belongs to the class-II aminoacyl-tRNA synthetase family. In terms of assembly, tetramer of two alpha and two beta subunits.

Its subcellular location is the cytoplasm. It carries out the reaction tRNA(Gly) + glycine + ATP = glycyl-tRNA(Gly) + AMP + diphosphate. This is Glycine--tRNA ligase alpha subunit from Rickettsia akari (strain Hartford).